Consider the following 121-residue polypeptide: Basic phospholipase A2 homolog BnSP-7 (121 aa).

7 disulfides stabilise this stretch: Cys-26–Cys-115, Cys-28–Cys-44, Cys-43–Cys-95, Cys-49–Cys-121, Cys-50–Cys-88, Cys-57–Cys-81, and Cys-75–Cys-86. Residues 105-117 (KKYRYHLKPFCKK) form an important for membrane-damaging activities in eukaryotes and bacteria; heparin-binding region.

Belongs to the phospholipase A2 family. Group II subfamily. K49 sub-subfamily. Homodimer; non-covalently linked (probable alternative/compact dimer conformation in solution). In terms of tissue distribution, expressed by the venom gland.

It is found in the secreted. Its activity is regulated as follows. Heparin inhibits the neuromuscular effect, myotoxin activity and edema-inducing effects. Bromophenacyl bromide (BPB) inhibits the neuromuscular effect, the myotoxin activity and edema-inducing effects. Snake venom phospholipase A2 (PLA2) that lacks enzymatic activity. Is myotoxic and displays edema-inducing activity. Displays bactericidal activity and promotes the blockage of the neuromuscular contraction of the chick biventer cervicis muscle. Also disrupts artificial membranes, and provokes tissue damages characterized by edema, necrosis and inflammation. May act as pro-inflammatory mediators, inducing metalloproteinase and cytokine production from the inflammatory and satellite cells. A model of myotoxic mechanism has been proposed: an apo Lys49-PLA2 is activated by the entrance of a hydrophobic molecule (e.g. fatty acid) at the hydrophobic channel of the protein leading to a reorientation of a monomer. This reorientation causes a transition between 'inactive' to 'active' states, causing alignment of C-terminal and membrane-docking sites (MDoS) side-by-side and putting the membrane-disruption sites (MDiS) in the same plane, exposed to solvent and in a symmetric position for both monomers. The MDoS region stabilizes the toxin on membrane by the interaction of charged residues with phospholipid head groups. Subsequently, the MDiS region destabilizes the membrane with penetration of hydrophobic residues. This insertion causes a disorganization of the membrane, allowing an uncontrolled influx of ions (i.e. calcium and sodium), and eventually triggering irreversible intracellular alterations and cell death. This Bothrops pauloensis (Neuwied's lancehead) protein is Basic phospholipase A2 homolog BnSP-7.